Here is a 579-residue protein sequence, read N- to C-terminus: Proteasome-associated ATPase (579 aa).

The disordered stretch occupies residues Met-1–Glu-21. A coiled-coil region spans residues Glu-8 to Pro-86. Residue Gly-268–Leu-273 coordinates ATP. A docks into pockets in the proteasome alpha-ring region spans residues Tyr-578 to Leu-579.

Belongs to the AAA ATPase family. As to quaternary structure, homohexamer. Assembles into a hexameric ring structure that caps the 20S proteasome core. Strongly interacts with the prokaryotic ubiquitin-like protein Pup through a hydrophobic interface; the interacting region of ARC lies in its N-terminal coiled-coil domain. There is one Pup binding site per ARC hexamer ring. Upon ATP-binding, the C-terminus of ARC interacts with the alpha-rings of the proteasome core, possibly by binding to the intersubunit pockets.

It participates in protein degradation; proteasomal Pup-dependent pathway. In terms of biological role, ATPase which is responsible for recognizing, binding, unfolding and translocation of pupylated proteins into the bacterial 20S proteasome core particle. May be essential for opening the gate of the 20S proteasome via an interaction with its C-terminus, thereby allowing substrate entry and access to the site of proteolysis. Thus, the C-termini of the proteasomal ATPase may function like a 'key in a lock' to induce gate opening and therefore regulate proteolysis. The sequence is that of Proteasome-associated ATPase from Acidimicrobium ferrooxidans (strain DSM 10331 / JCM 15462 / NBRC 103882 / ICP).